We begin with the raw amino-acid sequence, 232 residues long: Large ribosomal subunit protein uL1 (232 aa).

It belongs to the universal ribosomal protein uL1 family. In terms of assembly, part of the 50S ribosomal subunit.

Functionally, binds directly to 23S rRNA. The L1 stalk is quite mobile in the ribosome, and is involved in E site tRNA release. Its function is as follows. Protein L1 is also a translational repressor protein, it controls the translation of the L11 operon by binding to its mRNA. The sequence is that of Large ribosomal subunit protein uL1 from Bacillus pumilus (strain SAFR-032).